A 670-amino-acid chain; its full sequence is Putative segment polarity protein dishevelled homolog DVL1P1 (670 aa).

A DIX domain is found at 1-85; sequence MAETKIIYHM…RVVSWLVLVE (85 aa). Residues 89–240 are disordered; sequence SDAGSQGTDS…ADRASSFSSM (152 aa). Positions 142 to 151 are enriched in basic residues; the sequence is SHRRDRARRR. Residues 152-171 are compositionally biased toward basic and acidic residues; the sequence is NREEAARTNGHPRGDRRRDV. Composition is skewed to low complexity over residues 176-192 and 201-214; these read DSAS…SSFV and SRLS…TSSR. A compositionally biased stretch (basic residues) spans 215–228; sequence LIRKHKRRRRKQRL. Positions 251–323 constitute a PDZ domain; that stretch reads TVTLNMERHH…NDDAVRVLRE (73 aa). Residues 400–474 form the DEP domain; that stretch reads PDSGLEIRDR…SEQCYYVFGD (75 aa). A disordered region spans residues 518 to 642; that stretch reads PGPPPCFPPA…PGGPPVRELA (125 aa). Low complexity-rich tracts occupy residues 526–553 and 600–614; these read PAYQ…SSGS and SRGS…SYAP.

This sequence belongs to the DSH family. As to expression, expressed in thymus, heart, liver, kidney, brain, skeletal muscle, and pancreas.

It localises to the cytoplasm. Functionally, may play a role in the signal transduction pathway mediated by multiple Wnt genes. This chain is Putative segment polarity protein dishevelled homolog DVL1P1 (DVL1P1), found in Homo sapiens (Human).